We begin with the raw amino-acid sequence, 239 residues long: Enolase-phosphatase E1 (239 aa).

Mg(2+) contacts are provided by Asp-13 and Glu-15. Substrate-binding positions include 133–134 (SS) and Lys-170. Asp-196 serves as a coordination point for Mg(2+).

It belongs to the HAD-like hydrolase superfamily. MasA/MtnC family. As to quaternary structure, monomer. The cofactor is Mg(2+).

The protein localises to the cytoplasm. The protein resides in the nucleus. It catalyses the reaction 5-methylsulfanyl-2,3-dioxopentyl phosphate + H2O = 1,2-dihydroxy-5-(methylsulfanyl)pent-1-en-3-one + phosphate. The protein operates within amino-acid biosynthesis; L-methionine biosynthesis via salvage pathway; L-methionine from S-methyl-5-thio-alpha-D-ribose 1-phosphate: step 3/6. It participates in amino-acid biosynthesis; L-methionine biosynthesis via salvage pathway; L-methionine from S-methyl-5-thio-alpha-D-ribose 1-phosphate: step 4/6. Bifunctional enzyme that catalyzes the enolization of 2,3-diketo-5-methylthiopentyl-1-phosphate (DK-MTP-1-P) into the intermediate 2-hydroxy-3-keto-5-methylthiopentenyl-1-phosphate (HK-MTPenyl-1-P), which is then dephosphorylated to form the acireductone 1,2-dihydroxy-3-keto-5-methylthiopentene (DHK-MTPene). This chain is Enolase-phosphatase E1, found in Chaetomium globosum (strain ATCC 6205 / CBS 148.51 / DSM 1962 / NBRC 6347 / NRRL 1970) (Soil fungus).